We begin with the raw amino-acid sequence, 351 residues long: GMP reductase (351 aa).

108–131 (EDFVKLKQILSLSSKLKYICIDVA) is an NADP(+) binding site. The K(+) site is built by G181 and G183. C186 (thioimidate intermediate) is an active-site residue. An NADP(+)-binding site is contributed by 216-239 (IISDGGCVVSGDIAKAFGGGADFV).

The protein belongs to the IMPDH/GMPR family. GuaC type 1 subfamily. Homotetramer.

It carries out the reaction IMP + NH4(+) + NADP(+) = GMP + NADPH + 2 H(+). In terms of biological role, catalyzes the irreversible NADPH-dependent deamination of GMP to IMP. It functions in the conversion of nucleobase, nucleoside and nucleotide derivatives of G to A nucleotides, and in maintaining the intracellular balance of A and G nucleotides. This chain is GMP reductase (guaC), found in Buchnera aphidicola subsp. Baizongia pistaciae (strain Bp).